The chain runs to 116 residues: Peptidyl-tRNA hydrolase (116 aa).

Belongs to the PTH2 family.

The protein resides in the cytoplasm. It catalyses the reaction an N-acyl-L-alpha-aminoacyl-tRNA + H2O = an N-acyl-L-amino acid + a tRNA + H(+). Functionally, the natural substrate for this enzyme may be peptidyl-tRNAs which drop off the ribosome during protein synthesis. This is Peptidyl-tRNA hydrolase from Methanococcus maripaludis (strain C6 / ATCC BAA-1332).